A 292-amino-acid chain; its full sequence is Protein rogdi homolog (292 aa).

Positions 1–12 are enriched in polar residues; it reads MEVQSLTITTNY. The interval 1–25 is disordered; the sequence is MEVQSLTITTNYPPKPASPNPQDIR.

The protein belongs to the rogdi family.

The protein localises to the nucleus envelope. This Caenorhabditis elegans protein is Protein rogdi homolog.